Reading from the N-terminus, the 249-residue chain is Zinc finger AN1 and C2H2 domain-containing stress-associated protein 13 (249 aa).

2 consecutive AN1-type zinc fingers follow at residues Pro-7–Val-55 and Ala-95–Ser-145. Zn(2+) contacts are provided by Cys-13, Cys-18, Cys-28, Cys-31, Cys-36, His-39, His-45, Cys-47, Cys-101, Cys-106, Cys-118, Cys-121, Cys-126, His-129, His-135, and Cys-137. The disordered stretch occupies residues Phe-194–Asn-213. The segment covering Asn-201–Gly-210 has biased composition (basic and acidic residues). A C2H2-type zinc finger spans residues Asp-220–His-243.

Its function is as follows. May be involved in environmental stress response. This is Zinc finger AN1 and C2H2 domain-containing stress-associated protein 13 (SAP13) from Arabidopsis thaliana (Mouse-ear cress).